The chain runs to 405 residues: CMP-sialic acid transporter 5 (405 aa).

Topologically, residues M1 to N43 are cytoplasmic. A helical transmembrane segment spans residues V44–S64. Residues K65 to P74 lie on the Lumenal side of the membrane. A helical transmembrane segment spans residues I75–I95. Topologically, residues Q96–A121 are cytoplasmic. The chain crosses the membrane as a helical span at residues L122–L142. Topologically, residues Y143–S147 are lumenal. Residues T148–M168 form a helical membrane-spanning segment. Residues K169–R171 are Cytoplasmic-facing. The chain crosses the membrane as a helical span at residues F172–L192. The Lumenal segment spans residues R193–T200. The chain crosses the membrane as a helical span at residues A201–P221. Over S222–N244 the chain is Cytoplasmic. The chain crosses the membrane as a helical span at residues L245–F265. Over Q266–T281 the chain is Lumenal. The helical transmembrane segment at M282–A302 threads the bilayer. Over D303–S322 the chain is Cytoplasmic. Residues A323 to I343 form a helical membrane-spanning segment. Over S344 to T405 the chain is Lumenal. Residues D368–T405 are disordered. Residues D389 to T405 show a composition bias toward basic and acidic residues.

It belongs to the nucleotide-sugar transporter family. CMP-Sialate:CMP antiporter (TC 2.A.7.12) subfamily.

The protein localises to the golgi apparatus membrane. Sugar transporter involved in the transport of CMP-sialic acid from the cytoplasm into the Golgi. May transport important nucleotide sugars such as CMP-Kdo (2-keto-3-deoxy-D-manno-octulosonic acid) in physiological conditions. The protein is CMP-sialic acid transporter 5 of Oryza sativa subsp. japonica (Rice).